The primary structure comprises 394 residues: Maltose permease (394 aa).

Topologically, residues 1 to 11 (MGAAFKWGAAA) are cytoplasmic. The helical transmembrane segment at 12–38 (RKTVFPLFYFLIFFAFGALFPLLSVYL) threads the bilayer. Over 39–45 (QEEARLS) the chain is Extracellular. A helical membrane pass occupies residues 46–74 (GAAIGWIMSLPPIVTMAAQPLWGTAADYT). Topologically, residues 75 to 78 (RKPV) are cytoplasmic. A helical membrane pass occupies residues 79 to 104 (GLLLAALVLAALFGVMYALAGSYRLF). Residues 105-108 (VVLT) lie on the Extracellular side of the membrane. Residues 109–126 (VLLSAMQSAIVPLSDSLA) traverse the membrane as a helical segment. Residues 127–137 (LRHVHEQGGNY) are Cytoplasmic-facing. A helical membrane pass occupies residues 138 to 160 (GAIRLWGSLGFAMAVLAVGWLSD). Residues 161–163 (HIA) lie on the Extracellular side of the membrane. The chain crosses the membrane as a helical span at residues 164–183 (FAVIFYAFSLALLTAAALAT). Over 184 to 213 (RLPRYPMGAPGALTRQDVRGLLASRPFRLL) the chain is Cytoplasmic. Residues 214 to 233 (LVATFLLFGPILANNSYFGL) form a helical membrane-spanning segment. The Extracellular portion of the chain corresponds to 234 to 237 (LIHE). Residues 238–262 (LGGTLTGIGLAFLFAAGSEAPFMKA) traverse the membrane as a helical segment. Over 263–272 (ADRLIGRFGM) the chain is Cytoplasmic. Residues 273–292 (VRLLLLAALISAARWLAYAA) traverse the membrane as a helical segment. Topologically, residues 293 to 295 (DPP) are extracellular. Residues 296–318 (LWFVYMTTVVQGCSVGLAIPTAL) form a helical membrane-spanning segment. At 319–330 (QYARRLAPERVQ) the chain is on the cytoplasmic side. The helical transmembrane segment at 331–358 (STAVALYSAVGNGLGAWFCTLVGGYLLE) threads the bilayer. Over 359-361 (RWQ) the chain is Extracellular. Residues 362-382 (IGAVYLFFSICTIVGVLVLLL) form a helical membrane-spanning segment. Residues 383 to 394 (LAKRERTAGEEK) lie on the Cytoplasmic side of the membrane.

The protein belongs to the major facilitator superfamily.

It is found in the cell membrane. High affinity transport of maltose. The polypeptide is Maltose permease (malA) (Geobacillus stearothermophilus (Bacillus stearothermophilus)).